Consider the following 397-residue polypeptide: MSKIIAINAGSSSLKFQLFEMPSEKVLTKGLVERIGLEDSIFTITVNGEKQKEITNIPDHAVAVNMLLNKLTENGIVKSLDEISGIGHRVVHGGEKFADSVLITDQVLADIEDLSELAPLHNPANIVGIKAFQEVLPNVPAVAVFDTAFHQTMPESAYLYSLPYEYYEKYGIRKYGFHGTSHKYVTERAAELLGRPLESLRLLSCHLGNGASIAAVEGGKSIDTSMGFTPLAGVTMGTRSGNIDPALIPYIMEKTGQSVEEVVNVLNKKSGMLGLTGYSSDLRDIIAKEEEGDHRAKVALDVFVSRIHKYIGSYAARMKGVDAIIFTAGIGENSAIIRERVLEGLEYMGVYFDAKRNNVFGEEAFISFPHSPVKIIVIPTDEEVMIARDVVRLGNVG.

Asn8 provides a ligand contact to Mg(2+). Lys15 provides a ligand contact to ATP. Arg89 provides a ligand contact to substrate. Asp146 (proton donor/acceptor) is an active-site residue. ATP is bound by residues 206–210 (HLGNG), 281–283 (DLR), and 329–333 (GIGEN). Glu382 lines the Mg(2+) pocket.

Belongs to the acetokinase family. As to quaternary structure, homodimer. Mg(2+) is required as a cofactor. The cofactor is Mn(2+).

The protein resides in the cytoplasm. It catalyses the reaction acetate + ATP = acetyl phosphate + ADP. It participates in metabolic intermediate biosynthesis; acetyl-CoA biosynthesis; acetyl-CoA from acetate: step 1/2. In terms of biological role, catalyzes the formation of acetyl phosphate from acetate and ATP. Can also catalyze the reverse reaction. This is Acetate kinase from Bacillus cytotoxicus (strain DSM 22905 / CIP 110041 / 391-98 / NVH 391-98).